Consider the following 340-residue polypeptide: Beta-hexosaminidase (340 aa).

Residues D60, R68, R127, and 157–158 each bind substrate; that span reads KH. Residue H170 is the Proton donor/acceptor of the active site. Catalysis depends on D242, which acts as the Nucleophile.

This sequence belongs to the glycosyl hydrolase 3 family. NagZ subfamily.

Its subcellular location is the cytoplasm. It carries out the reaction Hydrolysis of terminal non-reducing N-acetyl-D-hexosamine residues in N-acetyl-beta-D-hexosaminides.. The protein operates within cell wall biogenesis; peptidoglycan recycling. Plays a role in peptidoglycan recycling by cleaving the terminal beta-1,4-linked N-acetylglucosamine (GlcNAc) from peptide-linked peptidoglycan fragments, giving rise to free GlcNAc, anhydro-N-acetylmuramic acid and anhydro-N-acetylmuramic acid-linked peptides. The chain is Beta-hexosaminidase from Glaesserella parasuis serovar 5 (strain SH0165) (Haemophilus parasuis).